A 410-amino-acid polypeptide reads, in one-letter code: Arginine biosynthesis bifunctional protein ArgJ (410 aa).

Substrate contacts are provided by Thr-160, Lys-186, Thr-197, Glu-283, Asn-405, and Thr-410. Thr-197 acts as the Nucleophile in catalysis.

It belongs to the ArgJ family. In terms of assembly, heterotetramer of two alpha and two beta chains.

Its subcellular location is the cytoplasm. It catalyses the reaction N(2)-acetyl-L-ornithine + L-glutamate = N-acetyl-L-glutamate + L-ornithine. It carries out the reaction L-glutamate + acetyl-CoA = N-acetyl-L-glutamate + CoA + H(+). It participates in amino-acid biosynthesis; L-arginine biosynthesis; L-ornithine and N-acetyl-L-glutamate from L-glutamate and N(2)-acetyl-L-ornithine (cyclic): step 1/1. The protein operates within amino-acid biosynthesis; L-arginine biosynthesis; N(2)-acetyl-L-ornithine from L-glutamate: step 1/4. Its function is as follows. Catalyzes two activities which are involved in the cyclic version of arginine biosynthesis: the synthesis of N-acetylglutamate from glutamate and acetyl-CoA as the acetyl donor, and of ornithine by transacetylation between N(2)-acetylornithine and glutamate. In Geobacillus kaustophilus (strain HTA426), this protein is Arginine biosynthesis bifunctional protein ArgJ.